The following is a 98-amino-acid chain: Growth-regulated protein homolog gamma (98 aa).

The first 29 residues, 1 to 29 (MAPAASSAPRLLRAAMLLLLLVAAGRRAA), serve as a signal peptide directing secretion. 2 disulfides stabilise this stretch: Cys39/Cys65 and Cys41/Cys81.

The protein belongs to the intercrine alpha (chemokine CxC) family.

It localises to the secreted. The polypeptide is Growth-regulated protein homolog gamma (Bos taurus (Bovine)).